Reading from the N-terminus, the 172-residue chain is Nicotinamide-nucleotide adenylyltransferase (172 aa).

This sequence belongs to the archaeal NMN adenylyltransferase family.

Its subcellular location is the cytoplasm. It carries out the reaction beta-nicotinamide D-ribonucleotide + ATP + H(+) = diphosphate + NAD(+). Its pathway is cofactor biosynthesis; NAD(+) biosynthesis; NAD(+) from nicotinamide D-ribonucleotide: step 1/1. The chain is Nicotinamide-nucleotide adenylyltransferase from Aeropyrum pernix (strain ATCC 700893 / DSM 11879 / JCM 9820 / NBRC 100138 / K1).